The primary structure comprises 136 residues: UPF0213 protein ASA_0550 (136 aa).

In terms of domain architecture, GIY-YIG spans 17 to 92 (GQWSIYLVRT…KQQSKAFKER (76 aa)).

It belongs to the UPF0213 family.

This chain is UPF0213 protein ASA_0550, found in Aeromonas salmonicida (strain A449).